Here is a 1396-residue protein sequence, read N- to C-terminus: ABC-type transporter cicA (1396 aa).

The disordered stretch occupies residues 1–40 (MRLSSEAKIAESGGQPPTAGSRSETGSESTEAESADPKAQ). A compositionally biased stretch (low complexity) spans 18-29 (TAGSRSETGSES). 3 helical membrane passes run 142–162 (FLLGGFCHLISSLLIVFAPYL), 191–211 (GFVVGITVMQAIQSLCTNQFL), and 300–320 (MFHISWTAPVSIIVALILLLV). The 324-residue stretch at 143 to 466 (LLGGFCHLIS…LPLVLGQITD (324 aa)) folds into the ABC transmembrane type-1 1 domain. A glycan (N-linked (GlcNAc...) asparagine) is linked at Asn-321. 3 consecutive transmembrane segments (helical) span residues 324-344 (YSALAGFGLLVIGMPFLTYAV), 409-429 (ILCVSMAIPVFASMLSFITYA), and 440-460 (IFSSLALFNSLRMPLNLLPLV). Basic and acidic residues predominate over residues 510–533 (AADKEAEKVEKKANPRRTEPKSEA). Positions 510-543 (AADKEAEKVEKKANPRRTEPKSEAPTDSAESDEP) are disordered. Positions 525 to 751 (RRTEPKSEAP…NDLFKQLMST (227 aa)) constitute an ABC transporter 1 domain. 563 to 570 (GTVGSGKS) is an ATP binding site. Asn-604 carries N-linked (GlcNAc...) asparagine glycosylation. A disordered region spans residues 751 to 787 (TASQDSKEDEEEATEVVEEEAEKQAQQEPTKPAAALM). Residues 757-771 (KEDEEEATEVVEEEA) show a composition bias toward acidic residues. A run of 2 helical transmembrane segments spans residues 816-836 (LAILFLLAFANVVNVWTNLWL) and 852-872 (YIGIYAGLGAGSALTMFIFST). Positions 816–1093 (LAILFLLAFA…TVRQLAEVEN (278 aa)) constitute an ABC transmembrane type-1 2 domain. A glycan (N-linked (GlcNAc...) asparagine) is linked at Asn-880. The next 4 membrane-spanning stretches (helical) occupy residues 930 to 947 (MYAITITMIVSIMILIIV), 951 to 970 (YFAIALVPLFLLFLTASNYY), 1036 to 1056 (LSVRLDAVAVLLVFVTGVLVV), and 1065 to 1085 (SISGLVLSYILAIAQMLQFTV). N-linked (GlcNAc...) asparagine glycans are attached at residues Asn-1096, Asn-1150, and Asn-1154. One can recognise an ABC transporter 2 domain in the interval 1131-1380 (ITFDNVAMRY…EDGIFRAMCE (250 aa)). An ATP-binding site is contributed by 1165 to 1172 (GRTGAGKS).

This sequence belongs to the ABC transporter superfamily. ABCC family. Conjugate transporter (TC 3.A.1.208) subfamily.

The protein localises to the cell membrane. Its function is as follows. ABC-type transporter; part of the gene cluster that mediates the biosynthesis of cichorine, a phytotoxin active against knapweed, corn, and soybeans. CicA is probably involved in the secretion of cichorine. The sequence is that of ABC-type transporter cicA from Emericella nidulans (strain FGSC A4 / ATCC 38163 / CBS 112.46 / NRRL 194 / M139) (Aspergillus nidulans).